Consider the following 673-residue polypeptide: MACLLETPIRMSVLSEVTASSRHYVDRLFDPDPQKVLQGVIDMKNAVIGNNKQKANLIVLGAVPRLLYLLQQETSSTELKTECAVVLGSLAMGTENNVKSLLDCHIIPALLQGLLSPDLKFIEACLRCLRTIFTSPVTPEELLYTDATVIPHLMALLSRSRYTQEYICQIFSHCCKGPDHQTILFNHGAVQNIAHLLTSLSYKVRMQALKCFSVLAFENPQVSMTLVNVLVDGELLPQIFVKMLQRDKPIEMQLTSAKCLTYMCRAGAIRTDDNCIVLKTLPCLVRMCSKERLLEERVEGAETLAYLIEPDVELQRIASITDHLIAMLADYFKYPSSVSAITDIKRLDHDLKHAHELRQAAFKLYASLGANDEDIRKKIIETENMMDRIVTGLSESSVKVRLAAVRCLHSLSRSVQQLRTSFQDHAVWKPLMKVLQNAPDEILVVASSMLCNLLLEFSPSKEPILESGAVELLCGLTQSENPALRVNGIWALMNMAFQAEQKIKADILRSLSTEQLFRLLSDSDLNVLMKTLGLLRNLLSTRPHIDKIMSTHGKQIMQAVTLILEGEHNIEVKEQTLCILANIADGTTAKDLIMTNDDILQKIKYYMGHSHVKLQLAAMFCISNLIWNEEEGSQERQDKLRDMGIVDILHKLSQSPDSNLCDKAKMALQQYLA.

Residue A2 is modified to N-acetylalanine. ARM repeat units follow at residues 51 to 92 (NKQK…SLAM), 95 to 134 (ENNV…TIFT), 138 to 176 (TPEE…HCCK), 178 to 217 (PDHQ…VLAF), 224 to 265 (MTLV…YMCR), 269 to 309 (IRTD…YLIE), 313 to 352 (ELQR…HDLK), 374 to 413 (DIRK…SLSR), 416 to 455 (QQLR…NLLL), 458 to 497 (SPSK…NMAF), 501 to 540 (QKIK…NLLS), 543 to 585 (PHID…NIAD), 588 to 627 (TAKD…NLIW), and 634 to 673 (QERQ…QYLA). S337 carries the phosphoserine modification. Residue S512 is modified to Phosphoserine.

As to quaternary structure, identified in the CTLH complex that contains GID4, RANBP9 and/or RANBP10, MKLN1, MAEA, RMND5A (or alternatively its paralog RMND5B), GID8, ARMC8, WDR26 and YPEL5. Within this complex, MAEA, RMND5A (or alternatively its paralog RMND5B), GID8, WDR26, and RANBP9 and/or RANBP10 form the catalytic core, while GID4, MKLN1, ARMC8 and YPEL5 have ancillary roles.

Its subcellular location is the nucleus. It is found in the cytoplasm. Functionally, component of the CTLH E3 ubiquitin-protein ligase complex that selectively accepts ubiquitin from UBE2H and mediates ubiquitination and subsequent proteasomal degradation of the transcription factor HBP1. The chain is Armadillo repeat-containing protein 8 (ARMC8) from Homo sapiens (Human).